We begin with the raw amino-acid sequence, 297 residues long: Ribosomal RNA small subunit methyltransferase H (297 aa).

S-adenosyl-L-methionine is bound by residues 34 to 36, aspartate 54, phenylalanine 88, aspartate 106, and glutamine 113; that span reads AGH. The disordered stretch occupies residues 272-297; the sequence is PLTAGEEETDRNPRARSAKLRAAEKK.

The protein belongs to the methyltransferase superfamily. RsmH family.

The protein localises to the cytoplasm. The enzyme catalyses cytidine(1402) in 16S rRNA + S-adenosyl-L-methionine = N(4)-methylcytidine(1402) in 16S rRNA + S-adenosyl-L-homocysteine + H(+). In terms of biological role, specifically methylates the N4 position of cytidine in position 1402 (C1402) of 16S rRNA. This Acidobacterium capsulatum (strain ATCC 51196 / DSM 11244 / BCRC 80197 / JCM 7670 / NBRC 15755 / NCIMB 13165 / 161) protein is Ribosomal RNA small subunit methyltransferase H.